The following is a 222-amino-acid chain: uncharacterized protein (222 aa).

One can recognise an HTH gntR-type domain in the interval 8-77; the sequence is AKKGQIIYRY…GNAGYFVAKN (70 aa).

This is an uncharacterized protein from Mycoplasma pneumoniae (strain ATCC 29342 / M129 / Subtype 1) (Mycoplasmoides pneumoniae).